The following is a 711-amino-acid chain: Putative membrane protein ActII-3 (711 aa).

Transmembrane regions (helical) follow at residues 14–34, 175–195, 199–219, 235–255, 281–301, 313–333, 369–389, 516–536, 540–560, 573–593, 623–643, and 645–665; these read LKWL…PLAG, ADFK…VVTY, LLWL…QAIV, AMIL…LLVA, AIVA…LAAL, VGVL…LVIF, AVWV…VTLN, IIPV…RALV, LLIA…ALFF, FPLW…IFLV, AGLV…VFIA, and LGFT…SVLV. The interval 685-711 is disordered; it reads REDPSEDPAVSGMPDSIDSEASTTASR.

It belongs to the resistance-nodulation-cell division (RND) (TC 2.A.6) family. MmpL subfamily.

The protein localises to the cell membrane. This is Putative membrane protein ActII-3 (actII-3) from Streptomyces coelicolor (strain ATCC BAA-471 / A3(2) / M145).